Here is an 83-residue protein sequence, read N- to C-terminus: uncharacterized protein (83 aa).

Helical transmembrane passes span 23–43 (FSLW…QLIK) and 56–76 (TIFV…CVFL).

It localises to the cell membrane. This is an uncharacterized protein from Bacillus subtilis (strain 168).